The primary structure comprises 208 residues: Small ribosomal subunit protein uS4 (208 aa).

The 64-residue stretch at 98–161 (RRLDNVIYRM…KELEIIKESL (64 aa)) folds into the S4 RNA-binding domain.

Belongs to the universal ribosomal protein uS4 family. As to quaternary structure, part of the 30S ribosomal subunit. Contacts protein S5. The interaction surface between S4 and S5 is involved in control of translational fidelity.

Functionally, one of the primary rRNA binding proteins, it binds directly to 16S rRNA where it nucleates assembly of the body of the 30S subunit. With S5 and S12 plays an important role in translational accuracy. In Thermodesulfovibrio yellowstonii (strain ATCC 51303 / DSM 11347 / YP87), this protein is Small ribosomal subunit protein uS4.